Here is a 380-residue protein sequence, read N- to C-terminus: Cytochrome b (380 aa).

A run of 4 helical transmembrane segments spans residues 34–54, 78–99, 114–134, and 179–199; these read FGSL…FLAM, WLLR…YFHI, WNIG…GYVL, and FFTF…INLL. Residues histidine 84 and histidine 98 each contribute to the heme b site. Residue histidine 183 participates in heme b binding. Histidine 202 lines the a ubiquinone pocket. Helical transmembrane passes span 227–247, 289–309, 321–341, and 348–368; these read YKDL…STFA, LGGV…PIIH, IAKT…WIGG, and FITI…LLIP.

The protein belongs to the cytochrome b family. The cytochrome bc1 complex contains 3 respiratory subunits (MT-CYB, CYC1 and UQCRFS1), 2 core proteins (UQCRC1 and UQCRC2) and probably 6 low-molecular weight proteins. Requires heme b as cofactor.

It localises to the mitochondrion inner membrane. In terms of biological role, component of the ubiquinol-cytochrome c reductase complex (complex III or cytochrome b-c1 complex) that is part of the mitochondrial respiratory chain. The b-c1 complex mediates electron transfer from ubiquinol to cytochrome c. Contributes to the generation of a proton gradient across the mitochondrial membrane that is then used for ATP synthesis. The protein is Cytochrome b (mt-cyb) of Pelophylax plancyi (Korean pond frog).